The chain runs to 459 residues: ATP synthase subunit beta (459 aa).

Residue 149–156 (GGAGVGKT) coordinates ATP.

It belongs to the ATPase alpha/beta chains family. In terms of assembly, F-type ATPases have 2 components, CF(1) - the catalytic core - and CF(0) - the membrane proton channel. CF(1) has five subunits: alpha(3), beta(3), gamma(1), delta(1), epsilon(1). CF(0) has three main subunits: a(1), b(2) and c(9-12). The alpha and beta chains form an alternating ring which encloses part of the gamma chain. CF(1) is attached to CF(0) by a central stalk formed by the gamma and epsilon chains, while a peripheral stalk is formed by the delta and b chains.

The protein resides in the cell inner membrane. The enzyme catalyses ATP + H2O + 4 H(+)(in) = ADP + phosphate + 5 H(+)(out). In terms of biological role, produces ATP from ADP in the presence of a proton gradient across the membrane. The catalytic sites are hosted primarily by the beta subunits. This is ATP synthase subunit beta from Pseudomonas syringae pv. tomato (strain ATCC BAA-871 / DC3000).